A 366-amino-acid polypeptide reads, in one-letter code: UDP-N-acetylenolpyruvoylglucosamine reductase (366 aa).

An FAD-binding PCMH-type domain is found at 27–197 (LGGPAAGFVV…LRVRFLLRDG (171 aa)). Arginine 175 is an active-site residue. The active-site Proton donor is serine 252. Glutamate 358 is an active-site residue.

Belongs to the MurB family. FAD is required as a cofactor.

It is found in the cytoplasm. The catalysed reaction is UDP-N-acetyl-alpha-D-muramate + NADP(+) = UDP-N-acetyl-3-O-(1-carboxyvinyl)-alpha-D-glucosamine + NADPH + H(+). Its pathway is cell wall biogenesis; peptidoglycan biosynthesis. Its function is as follows. Cell wall formation. The chain is UDP-N-acetylenolpyruvoylglucosamine reductase from Saccharopolyspora erythraea (strain ATCC 11635 / DSM 40517 / JCM 4748 / NBRC 13426 / NCIMB 8594 / NRRL 2338).